Here is a 444-residue protein sequence, read N- to C-terminus: Na(+)-translocating NADH-quinone reductase subunit A (444 aa).

It belongs to the NqrA family. Composed of six subunits; NqrA, NqrB, NqrC, NqrD, NqrE and NqrF.

The enzyme catalyses a ubiquinone + n Na(+)(in) + NADH + H(+) = a ubiquinol + n Na(+)(out) + NAD(+). Functionally, NQR complex catalyzes the reduction of ubiquinone-1 to ubiquinol by two successive reactions, coupled with the transport of Na(+) ions from the cytoplasm to the periplasm. NqrA to NqrE are probably involved in the second step, the conversion of ubisemiquinone to ubiquinol. The protein is Na(+)-translocating NADH-quinone reductase subunit A of Shewanella denitrificans (strain OS217 / ATCC BAA-1090 / DSM 15013).